We begin with the raw amino-acid sequence, 226 residues long: ATP synthase subunit a (226 aa).

A run of 5 helical transmembrane segments spans residues 17-37 (FLFV…AKLA), 78-98 (LVAT…IPGF), 104-124 (NINF…FEGI), 175-195 (LFVW…GFAL), and 201-221 (FLQT…AVLL).

This sequence belongs to the ATPase A chain family. In terms of assembly, F-type ATPases have 2 components, CF(1) - the catalytic core - and CF(0) - the membrane proton channel. CF(1) has five subunits: alpha(3), beta(3), gamma(1), delta(1), epsilon(1). CF(0) has three main subunits: a(1), b(2) and c(9-12). The alpha and beta chains form an alternating ring which encloses part of the gamma chain. CF(1) is attached to CF(0) by a central stalk formed by the gamma and epsilon chains, while a peripheral stalk is formed by the delta and b chains.

The protein localises to the cell inner membrane. In terms of biological role, key component of the proton channel; it plays a direct role in the translocation of protons across the membrane. In Nitratiruptor sp. (strain SB155-2), this protein is ATP synthase subunit a.